The following is a 125-amino-acid chain: MINSPRVCVQVQSVYIESQSSPEEERYVFAYTVTIRNLGRSQVQLLGRYWLITNGHGRETEVQGEGVVGEQPHIPAGGEYQYTSGAVIETPLGTMQGHYEMIDIDGAPFRIEIPVFRLAVPTLIH.

One can recognise an ApaG domain in the interval 1 to 125 (MINSPRVCVQ…FRLAVPTLIH (125 aa)).

This is Protein ApaG from Klebsiella pneumoniae (strain 342).